A 387-amino-acid chain; its full sequence is EARP and GARP complex-interacting protein 1 (387 aa).

Met1 is subject to N-acetylmethionine. WD repeat units follow at residues 4–48 (DAPV…IIDF), 55–101 (INKN…VWRM), 124–164 (ELLC…LWDL), 172–214 (VLAS…GWDT), 219–258 (QIYCIENAHGQLVRDLDFNPNKQYYLASCGDDCKVKFWDT), and 263–302 (EPVKTLEEHSHWVWNVRYNHSHDQLVLTGSSDSRVILSNM). A disordered region spans residues 310 to 335 (FGHLVDDDDISDQEDHRSEEKSKEPL). Phosphoserine is present on Ser320. Over residues 322 to 335 (QEDHRSEEKSKEPL) the composition is skewed to basic and acidic residues. The WD 7 repeat unit spans residues 338-379 (NVIATYEEHEDSVYAVDWSSADPWLFASLSYDGRLVINRVPR).

It belongs to the WD repeat EIPR1 family. As to quaternary structure, interacts with two multisubunit tethering complexes: EARP composed of VPS50, VPS51, VPS52 and VPS53 subunits and GARP complex composed of VPS51, VPS52, VPS53 and VPS54 subunits. Interacts with SNAP29.

The protein resides in the golgi apparatus. Its subcellular location is the trans-Golgi network. Its function is as follows. Acts as a component of endosomal retrieval machinery that is involved in protein transport from early endosomes to either recycling endosomes or the trans-Golgi network. Mediates the recruitment of Golgi-associated retrograde protein (GARP) complex to the trans-Golgi network and controls early endosome-to-Golgi transport of internalized protein. Promotes the recycling of internalized transferrin receptor (TFRC) to the plasma membrane through interaction with endosome-associated recycling protein (EARP) complex. Controls proper insulin distribution and secretion, and retention of cargo in mature dense core vesicles. Required for the stability of the endosome-associated retrograde protein (EARP) complex subunits and for proper localization and association of EARP with membranes. In Homo sapiens (Human), this protein is EARP and GARP complex-interacting protein 1.